A 29-amino-acid chain; its full sequence is Cyclotide mang-A (29 aa).

The segment at residues 1-29 (GFPTCGETCTLGTCNTPGCTCSWPICTRD) is a cross-link (cyclopeptide (Gly-Asp)). Intrachain disulfides connect Cys-5/Cys-19, Cys-9/Cys-21, and Cys-14/Cys-26.

Belongs to the cyclotide family. Moebius subfamily. In terms of processing, this is a cyclic peptide.

Functionally, probably participates in a plant defense mechanism. The polypeptide is Cyclotide mang-A (Melicytus angustifolius (Hymenanthera angustifolia)).